The primary structure comprises 183 residues: ATP synthase subunit delta (183 aa).

The protein belongs to the ATPase delta chain family. As to quaternary structure, F-type ATPases have 2 components, F(1) - the catalytic core - and F(0) - the membrane proton channel. F(1) has five subunits: alpha(3), beta(3), gamma(1), delta(1), epsilon(1). F(0) has three main subunits: a(1), b(2) and c(10-14). The alpha and beta chains form an alternating ring which encloses part of the gamma chain. F(1) is attached to F(0) by a central stalk formed by the gamma and epsilon chains, while a peripheral stalk is formed by the delta and b chains.

The protein localises to the cell inner membrane. Its function is as follows. F(1)F(0) ATP synthase produces ATP from ADP in the presence of a proton or sodium gradient. F-type ATPases consist of two structural domains, F(1) containing the extramembraneous catalytic core and F(0) containing the membrane proton channel, linked together by a central stalk and a peripheral stalk. During catalysis, ATP synthesis in the catalytic domain of F(1) is coupled via a rotary mechanism of the central stalk subunits to proton translocation. Functionally, this protein is part of the stalk that links CF(0) to CF(1). It either transmits conformational changes from CF(0) to CF(1) or is implicated in proton conduction. The sequence is that of ATP synthase subunit delta from Thermotoga neapolitana (strain ATCC 49049 / DSM 4359 / NBRC 107923 / NS-E).